A 189-amino-acid chain; its full sequence is Ribosome maturation factor RimM (189 aa).

A PRC barrel domain is found at 96-169 (EDEFFQTDLI…TLLVEPYAAG (74 aa)). The disordered stretch occupies residues 170–189 (LIADDEDERPQNEKKKPKKS).

The protein belongs to the RimM family. In terms of assembly, binds ribosomal protein uS19.

Its subcellular location is the cytoplasm. In terms of biological role, an accessory protein needed during the final step in the assembly of 30S ribosomal subunit, possibly for assembly of the head region. Essential for efficient processing of 16S rRNA. May be needed both before and after RbfA during the maturation of 16S rRNA. It has affinity for free ribosomal 30S subunits but not for 70S ribosomes. The sequence is that of Ribosome maturation factor RimM from Brucella anthropi (strain ATCC 49188 / DSM 6882 / CCUG 24695 / JCM 21032 / LMG 3331 / NBRC 15819 / NCTC 12168 / Alc 37) (Ochrobactrum anthropi).